Consider the following 150-residue polypeptide: uncharacterized protein (150 aa).

Residues 19–93 enclose the Rhodanese domain; that stretch reads GAQDYVLVDV…SSKRLALRES (75 aa).

This is an uncharacterized protein from Synechococcus elongatus.